Consider the following 369-residue polypeptide: Molybdenum import ATP-binding protein ModC (369 aa).

In terms of domain architecture, ABC transporter spans 3–246; the sequence is TRPEQASKDT…LDLPLAHGDS (244 aa). ATP is bound at residue 44–51; it reads GPSGSGKT. The Mop domain maps to 305 to 369; it reads DTSILNILPA…AQIKGVAILG (65 aa).

This sequence belongs to the ABC transporter superfamily. Molybdate importer (TC 3.A.1.8) family. The complex is composed of two ATP-binding proteins (ModC), two transmembrane proteins (ModB) and a solute-binding protein (ModA).

The protein resides in the cell inner membrane. The enzyme catalyses molybdate(out) + ATP + H2O = molybdate(in) + ADP + phosphate + H(+). Functionally, part of the ABC transporter complex ModABC involved in molybdenum import. Responsible for energy coupling to the transport system. In Albidiferax ferrireducens (strain ATCC BAA-621 / DSM 15236 / T118) (Rhodoferax ferrireducens), this protein is Molybdenum import ATP-binding protein ModC.